A 411-amino-acid polypeptide reads, in one-letter code: Nuclear receptor subfamily 2 group F member 1-A (411 aa).

The segment at 1-68 is disordered; the sequence is MAMVVSVWRD…AGDKGSQNSG (68 aa). The segment covering 24–46 has biased composition (low complexity); it reads NPAAQPAREQQQAASAAPHTPQT. The nuclear receptor DNA-binding region spans 73–148; that stretch reads HIECVVCGDK…VGMRREAVQR (76 aa). 2 NR C4-type zinc fingers span residues 76-96 and 112-136; these read CVVC…CEGC and CRAN…LKKC. The NR LBD domain maps to 174–400; the sequence is YLSGYISLLL…TLIRDMLLSG (227 aa).

Belongs to the nuclear hormone receptor family. NR2 subfamily. First expressed in 11-12 hour embryos. In the rostral brain of 13 hour embryos, expressed within the anterior half of the midbrain and the posterior part of the diencephalon. In the presumptive hindbrain, expressed in a segment-like stripe in the anterior region, resembling the presumptive rhombomere units of the hindbrain. Also detected in the intermediate mesoderm, posterior to the first somite. As somitogenesis proceeds, expression extends posteriorly and flanks the 10 most anterior somites. Expression changes extensively both in level and expansion of domains between 13 and 20 hours. In the rostral brain, expression extends to include a major part of the diencephalon and a caudal portion of the telencephalon. Within the hindbrain, strongly expressed in the two most anterior rhombomeres, and a lower but uniform expression is seen to extend throughout rhombomere 7. In 28 hour embryos, higher and more uniform expression is seen in both rostral and hindbrain areas. Also expressed in the retina of the eye.

Its subcellular location is the nucleus. Putative transcription factor that is required in photoreceptor cells precursors during eye development. This chain is Nuclear receptor subfamily 2 group F member 1-A (nr2f1a), found in Danio rerio (Zebrafish).